A 148-amino-acid chain; its full sequence is Troponin C (148 aa).

EF-hand domains follow at residues 8–43, 44–79, 81–116, and 117–148; these read KQFNDAHQAFKLHDKKDEGAVSNKELTNLFKSLALH, VSDDKLQQWVDEMDEDATGVIRWEKFKILFERKVQE, EDERELRSAFRVLDKNNQGVIDVEDLRWILKSLGDD, and LNDDEIQDMINETDTDGSGTVDYEEFSALMLG. 5 residues coordinate Ca(2+): Asp-130, Asp-132, Ser-134, Thr-136, and Glu-141.

This sequence belongs to the troponin C family.

Functionally, troponin is the central regulatory protein of striated muscle contraction. Tn consists of three components: Tn-I which is the inhibitor of actomyosin ATPase, Tn-T which contains the binding site for tropomyosin and Tn-C. The binding of calcium to Tn-C abolishes the inhibitory action of Tn on actin filaments. The sequence is that of Troponin C from Todarodes pacificus (Japanese flying squid).